The following is a 124-amino-acid chain: Large ribosomal subunit protein bL12 (124 aa).

It belongs to the bacterial ribosomal protein bL12 family. In terms of assembly, homodimer. Part of the ribosomal stalk of the 50S ribosomal subunit. Forms a multimeric L10(L12)X complex, where L10 forms an elongated spine to which 2 to 4 L12 dimers bind in a sequential fashion. Binds GTP-bound translation factors.

Its function is as follows. Forms part of the ribosomal stalk which helps the ribosome interact with GTP-bound translation factors. Is thus essential for accurate translation. This Pelodictyon phaeoclathratiforme (strain DSM 5477 / BU-1) protein is Large ribosomal subunit protein bL12.